We begin with the raw amino-acid sequence, 567 residues long: Oxygen-dependent choline dehydrogenase (567 aa).

An FAD-binding site is contributed by 6–35; it reads DYIIVGAGSAGNTLATRLTEDEGVTVLLLE. Residues 182-203 are disordered; that stretch reads QQEGFGPMDRTVTPKGRRASTA. The Proton acceptor role is filled by H475.

It belongs to the GMC oxidoreductase family. FAD is required as a cofactor.

The enzyme catalyses choline + A = betaine aldehyde + AH2. The catalysed reaction is betaine aldehyde + NAD(+) + H2O = glycine betaine + NADH + 2 H(+). It participates in amine and polyamine biosynthesis; betaine biosynthesis via choline pathway; betaine aldehyde from choline (cytochrome c reductase route): step 1/1. Functionally, involved in the biosynthesis of the osmoprotectant glycine betaine. Catalyzes the oxidation of choline to betaine aldehyde and betaine aldehyde to glycine betaine at the same rate. In Pseudomonas fluorescens (strain ATCC BAA-477 / NRRL B-23932 / Pf-5), this protein is Oxygen-dependent choline dehydrogenase.